Consider the following 249-residue polypeptide: Spindlin-4 (249 aa).

3 tudor-like domain regions span residues 41-90, 119-168, and 201-246; these read VGCR…LELH, VGKA…YTLL, and VGKQ…YGLV. Histone H3K4me3 and H3R8me2a binding stretches follow at residues 80–85, E128, and 237–239; these read GKDSVY and DIH.

Belongs to the SPIN/STSY family. As to quaternary structure, interacts with C11orf84/SPINDOC. Associates with chromatin.

It is found in the cytoplasm. It localises to the nucleus. In terms of biological role, binds to acetylated and methylated histones, including H3K4me3 and H4K20me3, probably acting as a histone reader that recognizes chromatin marks to mediate downstream cellular effects. Promotes canonical WNT signaling, and is involved in the down-regulation of cell proliferation. The chain is Spindlin-4 (Spin4) from Mus musculus (Mouse).